Consider the following 217-residue polypeptide: tRNA (guanine-N(7)-)-methyltransferase (217 aa).

4 residues coordinate S-adenosyl-L-methionine: Glu44, Asp69, Asp96, and Asp118. Residue Asp118 is part of the active site. Substrate is bound at residue Lys122. Positions 124–129 are interaction with RNA; that stretch reads RHEKRR. Residues Asp154 and 193-196 each bind substrate; that span reads TEYE.

It belongs to the class I-like SAM-binding methyltransferase superfamily. TrmB family.

It catalyses the reaction guanosine(46) in tRNA + S-adenosyl-L-methionine = N(7)-methylguanosine(46) in tRNA + S-adenosyl-L-homocysteine. Its pathway is tRNA modification; N(7)-methylguanine-tRNA biosynthesis. Its function is as follows. Catalyzes the formation of N(7)-methylguanine at position 46 (m7G46) in tRNA. This chain is tRNA (guanine-N(7)-)-methyltransferase, found in Lactococcus lactis subsp. cremoris (strain SK11).